Consider the following 504-residue polypeptide: Maturase K (504 aa).

The protein belongs to the intron maturase 2 family. MatK subfamily.

It is found in the plastid. The protein resides in the chloroplast. Its function is as follows. Usually encoded in the trnK tRNA gene intron. Probably assists in splicing its own and other chloroplast group II introns. The protein is Maturase K of Actinidia deliciosa (Kiwi).